The sequence spans 530 residues: Carbohydrate sulfotransferase 2 (530 aa).

Residues 1 to 54 (MSRSPQRALPPGALPRLLQAAPAAAPRALLPQWPRRPGRRWPASPLGMKVFRRK) lie on the Cytoplasmic side of the membrane. A helical; Signal-anchor for type II membrane protein transmembrane segment spans residues 55-75 (ALVLCAGYALLLVLTMLNLLD). The Lumenal segment spans residues 76 to 530 (YKWHKEPLQQ…SKTLLRKPRL (455 aa)). The segment at 89-119 (DGPLGAAAGAAGGSWGRPGPPPAGPPRAHAR) is disordered. 173-179 (WRSGSSF) lines the 3'-phosphoadenylyl sulfate pocket. Asn-243 carries N-linked (GlcNAc...) asparagine glycosylation. 332–340 (RDPRAVASS) is a binding site for 3'-phosphoadenylyl sulfate. Residues Asn-457 and Asn-475 are each glycosylated (N-linked (GlcNAc...) asparagine).

The protein belongs to the sulfotransferase 1 family. Gal/GlcNAc/GalNAc subfamily. Homodimer; disulfide-linked. Homodimerization is not essential for enzyme activity. Post-translationally, glycosylation at Asn-475 is required for catalytic activity. In terms of tissue distribution, widely expressed. Highly expressed in bone marrow, peripheral blood leukocytes, spleen, brain, spinal cord, ovary and placenta. Expressed by high endothelial cells (HEVs) and leukocytes.

It is found in the golgi apparatus. The protein resides in the trans-Golgi network membrane. The enzyme catalyses 3-O-{N-acetyl-beta-D-glucosaminyl-(1-&gt;3)-beta-D-galactosyl-(1-&gt;3)-N-acetyl-alpha-D-galactosaminyl}-L-threonyl-[protein] + 3'-phosphoadenylyl sulfate = 3-O-{6-O-sulfo-N-acetyl-beta-D-glucosaminyl-(1-&gt;3)-beta-D-galactosyl-(1-&gt;3)-N-acetyl-alpha-D-galactosaminyl}-L-threonyl-[protein] + adenosine 3',5'-bisphosphate + H(+). It catalyses the reaction 3-O-{N-acetyl-beta-D-glucosaminyl-(1-&gt;3)-beta-D-galactosyl-(1-&gt;3)-N-acetyl-alpha-D-galactosaminyl}-L-seryl-[protein] + 3'-phosphoadenylyl sulfate = 3-O-{6-O-sulfo-N-acetyl-beta-D-glucosaminyl-(1-&gt;3)-beta-D-galactosyl-(1-&gt;3)-N-acetyl-alpha-D-galactosaminyl}-L-seryl-[protein] + adenosine 3',5'-bisphosphate + H(+). It carries out the reaction a 3-O-{beta-D-galactosyl-(1-&gt;3)-[N-acetyl-beta-D-glucosaminyl-(1-&gt;6)]-N-acetyl-alpha-D-galactosaminyl}-L-threonyl-[protein] + 3'-phosphoadenylyl sulfate = 3-O-{beta-D-galactosyl-(1-&gt;3)-[6-O-sulfo-N-acetyl-beta-D-glucosaminyl-(1-&gt;6)]-N-acetyl-alpha-D-galactosaminyl}-L-threonyl-[protein] + adenosine 3',5'-bisphosphate + H(+). The catalysed reaction is 3-O-{beta-D-galactosyl-(1-&gt;3)-[N-acetyl-beta-D-glucosaminyl-(1-&gt;6)]-N-acetyl-alpha-D-galactosaminyl}-L-seryl-[protein] + 3'-phosphoadenylyl sulfate = 3-O-{beta-D-galactosyl-(1-&gt;3)-[6-O-sulfo-N-acetyl-beta-D-glucosaminyl-(1-&gt;6)]-N-acetyl-alpha-D-galactosaminyl}-L-seryl-[protein] + adenosine 3',5'-bisphosphate + H(+). It participates in protein modification; carbohydrate sulfation. Functionally, sulfotransferase that utilizes 3'-phospho-5'-adenylyl sulfate (PAPS) as sulfonate donor to catalyze the transfer of sulfate to position 6 of non-reducing N-acetylglucosamine (GlcNAc) residues within keratan-like structures on N-linked glycans and within mucin-associated glycans that can ultimately serve as SELL ligands. SELL ligands are present in high endothelial cells (HEVs) and play a central role in lymphocyte homing at sites of inflammation. Participates in biosynthesis of the SELL ligand sialyl 6-sulfo Lewis X and in lymphocyte homing to Peyer patches. Has no activity toward O-linked sugars. Its substrate specificity may be influenced by its subcellular location. Sulfates GlcNAc residues at terminal, non-reducing ends of oligosaccharide chains. The polypeptide is Carbohydrate sulfotransferase 2 (CHST2) (Homo sapiens (Human)).